The sequence spans 260 residues: Translation initiation factor 2 subunit alpha (260 aa).

The region spanning 12 to 83 (GDLIVGTVHK…KKGHVDASLK (72 aa)) is the S1 motif domain.

Belongs to the eIF-2-alpha family. As to quaternary structure, heterotrimer composed of an alpha, a beta and a gamma chain.

Its function is as follows. eIF-2 functions in the early steps of protein synthesis by forming a ternary complex with GTP and initiator tRNA. The polypeptide is Translation initiation factor 2 subunit alpha (Methanosphaera stadtmanae (strain ATCC 43021 / DSM 3091 / JCM 11832 / MCB-3)).